A 923-amino-acid polypeptide reads, in one-letter code: Leucine--tRNA ligase (923 aa).

A 'HIGH' region motif is present at residues 41–52; sequence PYPSGEGLHVGH. Residues 698–702 carry the 'KMSKS' region motif; sequence KMSKS. Lys-701 lines the ATP pocket.

This sequence belongs to the class-I aminoacyl-tRNA synthetase family.

It localises to the cytoplasm. The enzyme catalyses tRNA(Leu) + L-leucine + ATP = L-leucyl-tRNA(Leu) + AMP + diphosphate. The polypeptide is Leucine--tRNA ligase (Amoebophilus asiaticus (strain 5a2)).